Here is a 515-residue protein sequence, read N- to C-terminus: Histidine ammonia-lyase (515 aa).

Positions 142-144 (ASG) form a cross-link, 5-imidazolinone (Ala-Gly). 2,3-didehydroalanine (Ser) is present on Ser143.

This sequence belongs to the PAL/histidase family. Post-translationally, contains an active site 4-methylidene-imidazol-5-one (MIO), which is formed autocatalytically by cyclization and dehydration of residues Ala-Ser-Gly.

It localises to the cytoplasm. The catalysed reaction is L-histidine = trans-urocanate + NH4(+). Its pathway is amino-acid degradation; L-histidine degradation into L-glutamate; N-formimidoyl-L-glutamate from L-histidine: step 1/3. In Bradyrhizobium sp. (strain BTAi1 / ATCC BAA-1182), this protein is Histidine ammonia-lyase.